The sequence spans 729 residues: Fatty acid oxidation complex subunit alpha (729 aa).

The enoyl-CoA hydratase/isomerase stretch occupies residues 1–189 (MLYQSETLQL…KVGLVDAVVA (189 aa)). Position 296 (Asp-296) interacts with substrate. The 3-hydroxyacyl-CoA dehydrogenase stretch occupies residues 311–729 (SAPKQAAVLG…LLDVSISQPA (419 aa)). Residues Met-324, Asp-343, 400 to 402 (VVE), Lys-407, and Ser-429 contribute to the NAD(+) site. His-450 functions as the For 3-hydroxyacyl-CoA dehydrogenase activity in the catalytic mechanism. Asn-453 contributes to the NAD(+) binding site. Substrate is bound by residues Asn-500 and Tyr-660.

It in the N-terminal section; belongs to the enoyl-CoA hydratase/isomerase family. This sequence in the C-terminal section; belongs to the 3-hydroxyacyl-CoA dehydrogenase family. In terms of assembly, heterotetramer of two alpha chains (FadB) and two beta chains (FadA).

The catalysed reaction is a (3S)-3-hydroxyacyl-CoA + NAD(+) = a 3-oxoacyl-CoA + NADH + H(+). It catalyses the reaction a (3S)-3-hydroxyacyl-CoA = a (2E)-enoyl-CoA + H2O. It carries out the reaction a 4-saturated-(3S)-3-hydroxyacyl-CoA = a (3E)-enoyl-CoA + H2O. The enzyme catalyses (3S)-3-hydroxybutanoyl-CoA = (3R)-3-hydroxybutanoyl-CoA. The catalysed reaction is a (3Z)-enoyl-CoA = a 4-saturated (2E)-enoyl-CoA. It catalyses the reaction a (3E)-enoyl-CoA = a 4-saturated (2E)-enoyl-CoA. It functions in the pathway lipid metabolism; fatty acid beta-oxidation. Involved in the aerobic and anaerobic degradation of long-chain fatty acids via beta-oxidation cycle. Catalyzes the formation of 3-oxoacyl-CoA from enoyl-CoA via L-3-hydroxyacyl-CoA. It can also use D-3-hydroxyacyl-CoA and cis-3-enoyl-CoA as substrate. The sequence is that of Fatty acid oxidation complex subunit alpha from Yersinia enterocolitica serotype O:8 / biotype 1B (strain NCTC 13174 / 8081).